The sequence spans 77 residues: Mu-conotoxin BuIIIA (77 aa).

Residues M1–P22 form the signal peptide. The propeptide occupies Q23–R51. A disordered region spans residues D26–S46. Basic and acidic residues predominate over residues P28–D38. 3 disulfides stabilise this stretch: C56/C67, C57/C73, and C63/C74. Position 74 is a cysteine amide (C74).

This sequence belongs to the conotoxin M superfamily. Expressed by the venom duct.

Its subcellular location is the secreted. Its function is as follows. Mu-conotoxins block voltage-gated sodium channels (Nav). This synthetic toxin potently blocks rNav1.2/SCN2A, and rNav1.4/SCN4A. It also moderately blocks rNav1.1/SCN1A, rNav1.3/SCN3A, rNav1.5/SCN5A, and mNav1.6/SCN8A. The inhibition is reversible. This chain is Mu-conotoxin BuIIIA, found in Conus bullatus (Bubble cone).